Here is a 162-residue protein sequence, read N- to C-terminus: D-aminoacyl-tRNA deacylase (162 aa).

A Gly-cisPro motif, important for rejection of L-amino acids motif is present at residues 145-146 (GP).

Belongs to the DTD family. Homodimer.

The protein resides in the cytoplasm. It carries out the reaction glycyl-tRNA(Ala) + H2O = tRNA(Ala) + glycine + H(+). The enzyme catalyses a D-aminoacyl-tRNA + H2O = a tRNA + a D-alpha-amino acid + H(+). In terms of biological role, an aminoacyl-tRNA editing enzyme that deacylates mischarged D-aminoacyl-tRNAs. Also deacylates mischarged glycyl-tRNA(Ala), protecting cells against glycine mischarging by AlaRS. Acts via tRNA-based rather than protein-based catalysis; rejects L-amino acids rather than detecting D-amino acids in the active site. By recycling D-aminoacyl-tRNA to D-amino acids and free tRNA molecules, this enzyme counteracts the toxicity associated with the formation of D-aminoacyl-tRNA entities in vivo and helps enforce protein L-homochirality. This chain is D-aminoacyl-tRNA deacylase, found in Bifidobacterium longum (strain NCC 2705).